Reading from the N-terminus, the 322-residue chain is Crystallin J1A (322 aa).

It belongs to the ADP-ribosylglycohydrolase family. J1 crystallin subfamily. As to expression, expressed in the rhopalia. Present in both the large and small eyes.

This is Crystallin J1A from Tripedalia cystophora (Jellyfish).